The chain runs to 511 residues: GMP synthase [glutamine-hydrolyzing] (511 aa).

The Glutamine amidotransferase type-1 domain occupies 5 to 195; sequence DILVLDFGSQ…AKYACNCESV (191 aa). The active-site Nucleophile is Cys82. Catalysis depends on residues His169 and Glu171. In terms of domain architecture, GMPS ATP-PPase spans 196 to 386; sequence WNMGSFAKTQ…LGLSKEVVYR (191 aa). ATP is bound at residue 223-229; that stretch reads SGGVDSS.

As to quaternary structure, homodimer.

It carries out the reaction XMP + L-glutamine + ATP + H2O = GMP + L-glutamate + AMP + diphosphate + 2 H(+). Its pathway is purine metabolism; GMP biosynthesis; GMP from XMP (L-Gln route): step 1/1. In terms of biological role, catalyzes the synthesis of GMP from XMP. This is GMP synthase [glutamine-hydrolyzing] from Campylobacter jejuni subsp. doylei (strain ATCC BAA-1458 / RM4099 / 269.97).